A 290-amino-acid polypeptide reads, in one-letter code: Arylamine N-acetyltransferase 1 (290 aa).

Position 1 is an N-acetylmethionine (M1). C68 functions as the Acyl-thioester intermediate in the catalytic mechanism. Residue S103 participates in CoA binding. Position 106 to 107 (106 to 107) interacts with substrate; it reads VH. Active-site residues include H107 and D122. Y208 contributes to the CoA binding site.

Belongs to the arylamine N-acetyltransferase family.

The protein localises to the cytoplasm. The enzyme catalyses an arylamine + acetyl-CoA = an N-acetylarylamine + CoA. Its function is as follows. Participates in the detoxification of a plethora of hydrazine and arylamine drugs. Acetylates both arylamines and arylalkylamines. The polypeptide is Arylamine N-acetyltransferase 1 (Nat1) (Rattus norvegicus (Rat)).